The sequence spans 605 residues: Protein cueball (605 aa).

Positions 1-31 are cleaved as a signal peptide; sequence MAYIDQKHNTFWDDFAIALRDKIVFLNSTWG. N-linked (GlcNAc...) asparagine glycosylation is found at N27, N64, and N85. Residues 32-486 are Extracellular-facing; it reads EIHASAHRFE…QCGPAPPVQG (455 aa). LDL-receptor class B repeat units lie at residues 53–97, 98–145, 146–190, and 191–236; these read EMIY…DPLN, RNLF…DICR, RQLY…DQLS, and DRIF…NEDA. Residues N261 and N314 are each glycosylated (N-linked (GlcNAc...) asparagine). EGF-like domains lie at 322–359 and 394–431; these read EGDR…ARCE and EYHK…ERCE. 5 disulfide bridges follow: C334-C347, C349-C358, C398-C408, C402-C419, and C421-C430. Residues N433 and N464 are each glycosylated (N-linked (GlcNAc...) asparagine). A helical membrane pass occupies residues 487–507; it reads PLIIVIVLGLVTTSGLVALTV. Topologically, residues 508-605 are cytoplasmic; it reads HGVRLIYKPK…IHSMEDNLLS (98 aa).

It belongs to the cueball family.

Its subcellular location is the cell membrane. Functionally, has a role in spermatogenesis and oogenesis. This Drosophila grimshawi (Hawaiian fruit fly) protein is Protein cueball.